Consider the following 271-residue polypeptide: uncharacterized protein (271 aa).

This is an uncharacterized protein from Human cytomegalovirus (strain Merlin) (HHV-5).